The chain runs to 155 residues: Keratin-associated protein 4-7 (155 aa).

A run of 20 repeats spans residues 5–9 (CCGSV), 24–28 (CCRPS), 29–33 (CCQTT), 34–38 (CCRTT), 44–48 (CCVSS), 49–53 (CCRPQ), 54–58 (CCQSV), 59–63 (CCQPT), 64–68 (CCRPT), 69–73 (CCETT), 74–78 (CCHPR), 79–83 (CCISS), 84–88 (CCRPS), 89–93 (CCMSS), 94–98 (CCKPQ), 99–103 (CCQSV), 104–108 (CCQPT), 109–113 (CCRPS), 114–118 (CCRPC), and 119–123 (CCLRP). The tract at residues 5-123 (CCGSVCSDQG…CCRPCCCLRP (119 aa)) is 20 X 5 AA repeats of C-C-[GIKRQVHEML]-[SPTRV]-[STVQRCP].

Belongs to the KRTAP type 4 family. As to quaternary structure, interacts with hair keratins. In terms of tissue distribution, expressed in the hair follicles.

Functionally, in the hair cortex, hair keratin intermediate filaments are embedded in an interfilamentous matrix, consisting of hair keratin-associated proteins (KRTAP), which are essential for the formation of a rigid and resistant hair shaft through their extensive disulfide bond cross-linking with abundant cysteine residues of hair keratins. The matrix proteins include the high-sulfur and high-glycine-tyrosine keratins. This Homo sapiens (Human) protein is Keratin-associated protein 4-7 (KRTAP4-7).